The sequence spans 270 residues: MSNLQTRIITAIVLGTITLWLTWVGGVGFTLFSIAIGLAMFYEWTELSATRQTAFSRLFGWAWLIVTGILLILDRGALLTIGFLVAGCAILLVTQWKSGRGWPAAGLFYAGFSALSLSLLRGDEPFGFTTIVFLFAVVWSTDIAAYFNGRALGGPKLAPRFSPNKTWSGAIGGAAAAVAGGLLVASLVAAPGGWGVPVLALLLSIVSQIGDLAESWVKRQFGAKDSGRLLPGHGGVLDRVDGLVAAAALLYLFGAIFAEPDVPSAIFFSF.

Helical transmembrane passes span 19–39, 53–73, 76–96, 101–121, 126–146, 183–203, and 248–268; these read LWLT…IGLA, TAFS…LLIL, GALL…VTQW, GWPA…SLLR, FGFT…IAAY, LVAS…ALLL, and ALLY…AIFF.

It belongs to the CDS family.

It localises to the cell inner membrane. It catalyses the reaction a 1,2-diacyl-sn-glycero-3-phosphate + CTP + H(+) = a CDP-1,2-diacyl-sn-glycerol + diphosphate. Its pathway is phospholipid metabolism; CDP-diacylglycerol biosynthesis; CDP-diacylglycerol from sn-glycerol 3-phosphate: step 3/3. The sequence is that of Phosphatidate cytidylyltransferase (cdsA) from Brucella suis biovar 1 (strain 1330).